The following is a 121-amino-acid chain: Large ribosomal subunit protein uL18 (121 aa).

Belongs to the universal ribosomal protein uL18 family. In terms of assembly, part of the 50S ribosomal subunit; part of the 5S rRNA/L5/L18/L25 subcomplex. Contacts the 5S and 23S rRNAs.

Functionally, this is one of the proteins that bind and probably mediate the attachment of the 5S RNA into the large ribosomal subunit, where it forms part of the central protuberance. The sequence is that of Large ribosomal subunit protein uL18 from Verminephrobacter eiseniae (strain EF01-2).